Here is a 260-residue protein sequence, read N- to C-terminus: DNA repair protein RecO (260 aa).

It belongs to the RecO family.

Its function is as follows. Involved in DNA repair and RecF pathway recombination. In Ligilactobacillus salivarius (strain UCC118) (Lactobacillus salivarius), this protein is DNA repair protein RecO.